Here is an 81-residue protein sequence, read N- to C-terminus: MAHIVKIYDTCIGCTQCVRACPLDVLEMVPWDGCKASQMASAPRTEDCVGCKRCETACPTDFLSVRVYLGSESTRSMGLSY.

4Fe-4S ferredoxin-type domains follow at residues 2 to 31 and 39 to 68; these read AHIV…MVPW and MASA…VRVY. [4Fe-4S] cluster contacts are provided by Cys11, Cys14, Cys17, Cys21, Cys48, Cys51, Cys54, and Cys58.

In terms of assembly, the eukaryotic PSI reaction center is composed of at least 11 subunits. Requires [4Fe-4S] cluster as cofactor.

The protein localises to the plastid. It is found in the chloroplast thylakoid membrane. It catalyses the reaction reduced [plastocyanin] + hnu + oxidized [2Fe-2S]-[ferredoxin] = oxidized [plastocyanin] + reduced [2Fe-2S]-[ferredoxin]. Apoprotein for the two 4Fe-4S centers FA and FB of photosystem I (PSI); essential for photochemical activity. FB is the terminal electron acceptor of PSI, donating electrons to ferredoxin. The C-terminus interacts with PsaA/B/D and helps assemble the protein into the PSI complex. Required for binding of PsaD and PsaE to PSI. PSI is a plastocyanin/cytochrome c6-ferredoxin oxidoreductase, converting photonic excitation into a charge separation, which transfers an electron from the donor P700 chlorophyll pair to the spectroscopically characterized acceptors A0, A1, FX, FA and FB in turn. The protein is Photosystem I iron-sulfur center of Chlamydomonas reinhardtii (Chlamydomonas smithii).